The chain runs to 192 residues: dTTP/UTP pyrophosphatase (192 aa).

Asp72 acts as the Proton acceptor in catalysis.

Belongs to the Maf family. YhdE subfamily. It depends on a divalent metal cation as a cofactor.

Its subcellular location is the cytoplasm. It carries out the reaction dTTP + H2O = dTMP + diphosphate + H(+). The enzyme catalyses UTP + H2O = UMP + diphosphate + H(+). In terms of biological role, nucleoside triphosphate pyrophosphatase that hydrolyzes dTTP and UTP. May have a dual role in cell division arrest and in preventing the incorporation of modified nucleotides into cellular nucleic acids. This Geobacter metallireducens (strain ATCC 53774 / DSM 7210 / GS-15) protein is dTTP/UTP pyrophosphatase.